We begin with the raw amino-acid sequence, 200 residues long: UPF0301 protein Veis_1517 (200 aa).

Belongs to the UPF0301 (AlgH) family.

This is UPF0301 protein Veis_1517 from Verminephrobacter eiseniae (strain EF01-2).